Consider the following 547-residue polypeptide: CTP synthase (547 aa).

Positions M1 to I265 are amidoligase domain. S13 contacts CTP. Position 13 (S13) interacts with UTP. ATP is bound by residues S14 to L19 and D71. Mg(2+) contacts are provided by D71 and E139. Residues D146–E148, K186–Q191, and K222 contribute to the CTP site. UTP is bound by residues K186–Q191 and K222. The region spanning R291–L546 is the Glutamine amidotransferase type-1 domain. G353 provides a ligand contact to L-glutamine. The Nucleophile; for glutamine hydrolysis role is filled by C380. L-glutamine contacts are provided by residues L381–Q384, E404, and R474. Active-site residues include H519 and E521.

Belongs to the CTP synthase family. Homotetramer.

The enzyme catalyses UTP + L-glutamine + ATP + H2O = CTP + L-glutamate + ADP + phosphate + 2 H(+). It carries out the reaction L-glutamine + H2O = L-glutamate + NH4(+). It catalyses the reaction UTP + NH4(+) + ATP = CTP + ADP + phosphate + 2 H(+). The protein operates within pyrimidine metabolism; CTP biosynthesis via de novo pathway; CTP from UDP: step 2/2. Its activity is regulated as follows. Allosterically activated by GTP, when glutamine is the substrate; GTP has no effect on the reaction when ammonia is the substrate. The allosteric effector GTP functions by stabilizing the protein conformation that binds the tetrahedral intermediate(s) formed during glutamine hydrolysis. Inhibited by the product CTP, via allosteric rather than competitive inhibition. In terms of biological role, catalyzes the ATP-dependent amination of UTP to CTP with either L-glutamine or ammonia as the source of nitrogen. Regulates intracellular CTP levels through interactions with the four ribonucleotide triphosphates. This is CTP synthase from Cereibacter sphaeroides (strain ATCC 17025 / ATH 2.4.3) (Rhodobacter sphaeroides).